The following is a 660-amino-acid chain: MKTVVFAYHDMGCLGIEALLAAGYEISAIFTHTDNPGEKAFYGSVARLAAERGIPVYAPDDVNHPLWVERIAQLSPDVIFSFYYRHLICDEILQLAPAGAFNLHGSLLPKYRGRAPLNWVLVNGETETGVTLHRMVKRADAGAIVAQLRIAIAPDDIAITLHHKLCHAARQLLEQTLPAIKHGNILEIAQRENEATCFGRRTPDDSFLEWHKPASVLHNMVRAVADPWPGAFSYVGNQKFTVWSSRVHPHASKAQPGSVISVAPLLIACGDGALEIVTGQAGDGITMQGSQLAQTLGLVQGSRLNSQPACTARRRTRVLILGVNGFIGNHLTERLLREDHYEVYGLDIGSDAISRFLNHPHFHFVEGDISIHSEWIEYHVKKCDVVLPLVAIATPIEYTRNPLRVFELDFEENLRIIRYCVKYRKRIIFPSTSEVYGMCSDKYFDEDHSNLIVGPVNKPRWIYSVSKQLLDRVIWAYGEKEGLQFTLFRPFNWMGPRLDNLNAARIGSSRAITQLILNLVEGSPIKLIDGGKQKRCFTDIRDGIEALYRIIENAGNRCDGEIINIGNPENEASIEELGEMLLASFEKHPLRHHFPPFAGFRVVESSSYYGKGYQDVEHRKPSIRNAHRCLDWEPKIDMQETIDETLDFFLRTVDLTDKPS.

Positions Met1–Leu304 are formyltransferase ArnAFT. A (6R)-10-formyltetrahydrofolate-binding site is contributed by His86–Ile88. The Proton donor; for formyltransferase activity role is filled by His104. Residues Arg114 and Val136–Asp140 each bind (6R)-10-formyltetrahydrofolate. The dehydrogenase ArnADH stretch occupies residues Arg314–Ser660. Residues Asp347 and Asp368–Ile369 each bind NAD(+). Residues Ala393, Tyr398, and Thr432–Ser433 contribute to the UDP-alpha-D-glucuronate site. Glu434 (proton acceptor; for decarboxylase activity) is an active-site residue. Residues Arg460, Asn492, Lys526–Arg535, and Tyr613 each bind UDP-alpha-D-glucuronate. Arg619 serves as the catalytic Proton donor; for decarboxylase activity.

The protein in the N-terminal section; belongs to the Fmt family. UDP-L-Ara4N formyltransferase subfamily. It in the C-terminal section; belongs to the NAD(P)-dependent epimerase/dehydratase family. UDP-glucuronic acid decarboxylase subfamily. As to quaternary structure, homohexamer, formed by a dimer of trimers.

It carries out the reaction UDP-alpha-D-glucuronate + NAD(+) = UDP-beta-L-threo-pentopyranos-4-ulose + CO2 + NADH. It catalyses the reaction UDP-4-amino-4-deoxy-beta-L-arabinose + (6R)-10-formyltetrahydrofolate = UDP-4-deoxy-4-formamido-beta-L-arabinose + (6S)-5,6,7,8-tetrahydrofolate + H(+). It functions in the pathway nucleotide-sugar biosynthesis; UDP-4-deoxy-4-formamido-beta-L-arabinose biosynthesis; UDP-4-deoxy-4-formamido-beta-L-arabinose from UDP-alpha-D-glucuronate: step 1/3. It participates in nucleotide-sugar biosynthesis; UDP-4-deoxy-4-formamido-beta-L-arabinose biosynthesis; UDP-4-deoxy-4-formamido-beta-L-arabinose from UDP-alpha-D-glucuronate: step 3/3. The protein operates within bacterial outer membrane biogenesis; lipopolysaccharide biosynthesis. Its function is as follows. Bifunctional enzyme that catalyzes the oxidative decarboxylation of UDP-glucuronic acid (UDP-GlcUA) to UDP-4-keto-arabinose (UDP-Ara4O) and the addition of a formyl group to UDP-4-amino-4-deoxy-L-arabinose (UDP-L-Ara4N) to form UDP-L-4-formamido-arabinose (UDP-L-Ara4FN). The modified arabinose is attached to lipid A and is required for resistance to polymyxin and cationic antimicrobial peptides. The sequence is that of Bifunctional polymyxin resistance protein ArnA from Escherichia coli (strain SE11).